Here is a 120-residue protein sequence, read N- to C-terminus: C-C motif chemokine 2 (120 aa).

The N-terminal stretch at 1–23 (MQRSSVLLCLLVIEATFCSLLMA) is a signal peptide. Glutamine 24 carries the post-translational modification Pyrrolidone carboxylic acid. 2 disulfides stabilise this stretch: cysteine 33/cysteine 57 and cysteine 34/cysteine 73. Residues 91–120 (RTQQKQNSTAPQTSKPLNIRFTTQDPKNRS) form a disordered region. Residues 93–120 (QQKQNSTAPQTSKPLNIRFTTQDPKNRS) show a composition bias toward polar residues. Asparagine 97 carries an N-linked (GlcNAc...) asparagine glycan.

The protein belongs to the intercrine beta (chemokine CC) family. As to quaternary structure, monomer or homodimer; in equilibrium. Is tethered on endothelial cells by glycosaminoglycan (GAG) side chains of proteoglycans. Interacts with TNFAIP6 (via Link domain). In terms of processing, processing at the N-terminus can regulate receptor and target cell selectivity. Deletion of the N-terminal residue converts it from an activator of basophil to an eosinophil chemoattractant. Post-translationally, N-Glycosylated.

It is found in the secreted. Acts as a ligand for C-C chemokine receptor CCR2. Signals through binding and activation of CCR2 and induces a strong chemotactic response and mobilization of intracellular calcium ions. Exhibits a chemotactic activity for monocytes and basophils but not neutrophils or eosinophils. Plays an important role in mediating peripheral nerve injury-induced neuropathic pain. Increases NMDA-mediated synaptic transmission in both dopamine D1 and D2 receptor-containing neurons, which may be caused by MAPK/ERK-dependent phosphorylation of GRIN2B/NMDAR2B. This chain is C-C motif chemokine 2 (CCL2), found in Cavia porcellus (Guinea pig).